The primary structure comprises 197 residues: Imidazoleglycerol-phosphate dehydratase (197 aa).

It belongs to the imidazoleglycerol-phosphate dehydratase family.

It localises to the cytoplasm. The enzyme catalyses D-erythro-1-(imidazol-4-yl)glycerol 3-phosphate = 3-(imidazol-4-yl)-2-oxopropyl phosphate + H2O. It functions in the pathway amino-acid biosynthesis; L-histidine biosynthesis; L-histidine from 5-phospho-alpha-D-ribose 1-diphosphate: step 6/9. In Thermobifida fusca (strain YX), this protein is Imidazoleglycerol-phosphate dehydratase.